The chain runs to 364 residues: 3-isopropylmalate dehydrogenase (364 aa).

79-92 (GPKWNNINETSRPE) lines the NAD(+) pocket. Residues Arg-100, Arg-110, Arg-139, and Asp-228 each coordinate substrate. The Mg(2+) site is built by Asp-228, Asp-252, and Asp-256. 286 to 298 (GSAPDIAGKNIAN) provides a ligand contact to NAD(+).

This sequence belongs to the isocitrate and isopropylmalate dehydrogenases family. LeuB type 1 subfamily. As to quaternary structure, homodimer. Mg(2+) is required as a cofactor. The cofactor is Mn(2+).

The protein localises to the cytoplasm. It catalyses the reaction (2R,3S)-3-isopropylmalate + NAD(+) = 4-methyl-2-oxopentanoate + CO2 + NADH. It functions in the pathway amino-acid biosynthesis; L-leucine biosynthesis; L-leucine from 3-methyl-2-oxobutanoate: step 3/4. Catalyzes the oxidation of 3-carboxy-2-hydroxy-4-methylpentanoate (3-isopropylmalate) to 3-carboxy-4-methyl-2-oxopentanoate. The product decarboxylates to 4-methyl-2 oxopentanoate. In Blochmanniella floridana, this protein is 3-isopropylmalate dehydrogenase.